Consider the following 263-residue polypeptide: Palmitoyltransferase ZDHHC22 (263 aa).

Over 1–9 the chain is Cytoplasmic; it reads MLALRLLNV. The chain crosses the membrane as a helical span at residues 10 to 30; sequence VAPAYFLCISLVTFVLQLFLF. Residues 31–47 are Lumenal-facing; sequence LPSMREDPTATPLFSPA. The helical transmembrane segment at 48–68 threads the bilayer; the sequence is VLHGALFLFLSANALGNYILV. Residues 69 to 125 lie on the Cytoplasmic side of the membrane; the sequence is VQNSPDDLGACQGTSSQRPQRPPPSTHFCRVCARVTLRHDHHCFFTGNCIGSRNMRN. Positions 91–131 constitute a DHHC domain; that stretch reads PPSTHFCRVCARVTLRHDHHCFFTGNCIGSRNMRNFILFCL. The active-site S-palmitoyl cysteine intermediate is the cysteine 111. Transmembrane regions (helical) follow at residues 126 to 146 and 147 to 167; these read FILF…AGVA and YISA…TLLP. Residues 168–182 lie on the Cytoplasmic side of the membrane; the sequence is TSISQFFSGAVLGSD. A helical membrane pass occupies residues 183-203; it reads MFVILMLYLWFAVGLACAGFC. The Lumenal portion of the chain corresponds to 204–263; it reads CHQLLLILRGQTRYQVRKGVAVRARPWRKNLQEVFGKRWLLGLLVPMFNVGTESSKQQDK.

It belongs to the DHHC palmitoyltransferase family. Interacts with CNN3.

It localises to the endoplasmic reticulum membrane. It is found in the golgi apparatus membrane. The catalysed reaction is L-cysteinyl-[protein] + hexadecanoyl-CoA = S-hexadecanoyl-L-cysteinyl-[protein] + CoA. In terms of biological role, palmitoyltransferase that could catalyze the addition of palmitate onto various protein substrates and be involved in a variety of cellular processes. Catalyzes the palmitoylation of KCNMA1, regulating localization of KCNMA1 to the plasma membrane. Might also mediate palmitoylation of CNN3. This is Palmitoyltransferase ZDHHC22 from Rattus norvegicus (Rat).